The chain runs to 331 residues: Coiled-coil domain-containing protein 92 (331 aa).

Coiled-coil stretches lie at residues 18-44 (MAAT…HAST) and 76-152 (DGTS…EQRA). A compositionally biased stretch (low complexity) spans 171–184 (SSSGTSDASPSGSP). Residues 171–212 (SSSGTSDASPSGSPVLASYKPAPPKDKLPETPRRRMKKSLSA) form a disordered region. Over residues 193-203 (PPKDKLPETPR) the composition is skewed to basic and acidic residues. Residue serine 209 is modified to Phosphoserine.

In terms of assembly, interacts with CEP164. (Microbial infection) Interacts with ebolavirus protein NP; this interaction sequesters NP in the cytoplasm. In terms of processing, phosphorylated at Ser-209 by TTBK2.

It localises to the cytoplasm. It is found in the cytoskeleton. Its subcellular location is the microtubule organizing center. The protein resides in the centrosome. The protein localises to the centriole. Its function is as follows. Interferon-stimulated protein that plays a role in innate immunity. Strongly inhibits ebolavirus transcription and replication. Forms a complex with viral RNA-bound nucleocapsid NP and thereby prevents the transport of NP to the cell surface. The chain is Coiled-coil domain-containing protein 92 (CCDC92) from Homo sapiens (Human).